The following is a 199-amino-acid chain: Recombination protein RecR (199 aa).

A C4-type zinc finger spans residues 57-72 (CSVCGNITEDDPCPIC). A Toprim domain is found at 80-176 (SRVLVVERSR…KVTRLAHGLS (97 aa)).

This sequence belongs to the RecR family.

May play a role in DNA repair. It seems to be involved in an RecBC-independent recombinational process of DNA repair. It may act with RecF and RecO. The protein is Recombination protein RecR of Limosilactobacillus fermentum (strain NBRC 3956 / LMG 18251) (Lactobacillus fermentum).